The primary structure comprises 119 residues: Inner membrane protein YijD (119 aa).

Residues 1–8 (MKQANQDR) are Cytoplasmic-facing. Residues 9-28 (GTLLLALVAGLSINGTFAAL) traverse the membrane as a helical segment. Topologically, residues 29–31 (FSS) are periplasmic. Residues 32 to 50 (IVPFSVFPIISLVLTVYCL) form a helical membrane-spanning segment. Topologically, residues 51-61 (HQRYLNRTMPV) are cytoplasmic. Residues 62–84 (GLPGLAAACFILGVLLYSTVVRA) form a helical membrane-spanning segment. At 85 to 88 (EYPD) the chain is on the periplasmic side. Residues 89 to 108 (IGSNFFPAVLSVIMVFWIGA) form a helical membrane-spanning segment. Topologically, residues 109–119 (KMRNRKQEVAE) are cytoplasmic.

The protein resides in the cell inner membrane. This Escherichia coli O6:H1 (strain CFT073 / ATCC 700928 / UPEC) protein is Inner membrane protein YijD (yijD).